The sequence spans 235 residues: Probable transcriptional regulatory protein Ccon26_04940 (235 aa).

This sequence belongs to the TACO1 family.

The protein localises to the cytoplasm. The chain is Probable transcriptional regulatory protein Ccon26_04940 from Campylobacter concisus (strain 13826).